Consider the following 99-residue polypeptide: Small ribosomal subunit protein bS20 (99 aa).

It belongs to the bacterial ribosomal protein bS20 family.

Its function is as follows. Binds directly to 16S ribosomal RNA. The protein is Small ribosomal subunit protein bS20 of Caldicellulosiruptor saccharolyticus (strain ATCC 43494 / DSM 8903 / Tp8T 6331).